Here is a 425-residue protein sequence, read N- to C-terminus: Enolase (425 aa).

Position 162 (Gln162) interacts with (2R)-2-phosphoglycerate. The active-site Proton donor is the Glu204. Residues Asp241, Glu282, and Asp309 each coordinate Mg(2+). Positions 334, 363, 364, and 385 each coordinate (2R)-2-phosphoglycerate. Lys334 acts as the Proton acceptor in catalysis.

Belongs to the enolase family. The cofactor is Mg(2+).

Its subcellular location is the cytoplasm. The protein resides in the secreted. It localises to the cell surface. The catalysed reaction is (2R)-2-phosphoglycerate = phosphoenolpyruvate + H2O. It functions in the pathway carbohydrate degradation; glycolysis; pyruvate from D-glyceraldehyde 3-phosphate: step 4/5. Its function is as follows. Catalyzes the reversible conversion of 2-phosphoglycerate (2-PG) into phosphoenolpyruvate (PEP). It is essential for the degradation of carbohydrates via glycolysis. The chain is Enolase from Corynebacterium aurimucosum (strain ATCC 700975 / DSM 44827 / CIP 107346 / CN-1) (Corynebacterium nigricans).